A 151-amino-acid polypeptide reads, in one-letter code: Large ribosomal subunit protein bL9 (151 aa).

Belongs to the bacterial ribosomal protein bL9 family.

Functionally, binds to the 23S rRNA. This Pelobacter propionicus (strain DSM 2379 / NBRC 103807 / OttBd1) protein is Large ribosomal subunit protein bL9.